The following is a 420-amino-acid chain: 3-isopropylmalate dehydratase large subunit (420 aa).

3 residues coordinate [4Fe-4S] cluster: Cys300, Cys360, and Cys363.

The protein belongs to the aconitase/IPM isomerase family. LeuC type 2 subfamily. Heterodimer of LeuC and LeuD. Requires [4Fe-4S] cluster as cofactor.

The catalysed reaction is (2R,3S)-3-isopropylmalate = (2S)-2-isopropylmalate. It participates in amino-acid biosynthesis; L-leucine biosynthesis; L-leucine from 3-methyl-2-oxobutanoate: step 2/4. Functionally, catalyzes the isomerization between 2-isopropylmalate and 3-isopropylmalate, via the formation of 2-isopropylmaleate. This chain is 3-isopropylmalate dehydratase large subunit, found in Syntrophus aciditrophicus (strain SB).